We begin with the raw amino-acid sequence, 411 residues long: Carbamoyl phosphate synthase arginine-specific small chain (411 aa).

Ser50, Gly232, and Gly234 together coordinate L-glutamine. The region spanning 185-376 (NVALIDCGVK…FDNIEKYQLQ (192 aa)) is the Glutamine amidotransferase type-1 domain. The active-site Nucleophile is Cys264. The L-glutamine site is built by Leu265, Gln268, Asn306, Gly308, and Tyr309. Active-site residues include His349 and Glu351.

This sequence belongs to the CarA family. In terms of assembly, heterodimer composed of 2 chains; the small (or glutamine) chain promotes the hydrolysis of glutamine to ammonia, which is used by the large (or ammonia) chain to synthesize carbamoyl phosphate.

It localises to the cytoplasm. The enzyme catalyses hydrogencarbonate + L-glutamine + 2 ATP + H2O = carbamoyl phosphate + L-glutamate + 2 ADP + phosphate + 2 H(+). The catalysed reaction is L-glutamine + H2O = L-glutamate + NH4(+). Its pathway is amino-acid biosynthesis; L-arginine biosynthesis; carbamoyl phosphate from bicarbonate: step 1/1. Functionally, small subunit of the arginine-specific carbamoyl phosphate synthase (CPSase). CPSase catalyzes the formation of carbamoyl phosphate from the ammonia moiety of glutamine, carbonate, and phosphate donated by ATP, constituting the first step of 2 biosynthetic pathways, one leading to arginine and/or urea and the other to pyrimidine nucleotides. The small subunit (glutamine amidotransferase) binds and cleaves glutamine to supply the large subunit with the substrate ammonia. This chain is Carbamoyl phosphate synthase arginine-specific small chain (CPA1), found in Saccharomyces cerevisiae (strain ATCC 204508 / S288c) (Baker's yeast).